The following is a 224-amino-acid chain: Cysteine S-methyltransferase NleE (224 aa).

Residues 49–52 (GITR) are interaction with host proteins TAB2, TAB3 and ZRANB3. Positions 92, 98, 107, 111, 204, and 208 each coordinate S-adenosyl-L-methionine.

It belongs to the NleE/OspZ family. In terms of assembly, monomer.

Its subcellular location is the secreted. It localises to the host nucleus. It catalyses the reaction L-cysteinyl-[protein] + S-adenosyl-L-methionine = S-methyl-L-cysteinyl-[protein] + S-adenosyl-L-homocysteine + H(+). Cysteine methyltransferase effector that inhibits host cell NF-kappa-B activation by preventing nuclear translocation of host protein RELA/p65. Acts by mediating cysteine methylation of host proteins TAB2 and TAB3: methylation of a conserved cysteine residue of the RanBP2-type zinc finger (NZF) of TAB2 and TAB3 disrupts zinc-binding, thereby inactivating the ubiquitin chain-binding activity of TAB2 and TAB3, leading to NF-kappa-B inactivation. Also mediates cysteine methylation of host protein ZRANB3, inactivating its ability to bind ubiquitin chains. This Escherichia coli O127:H6 (strain E2348/69 / EPEC) protein is Cysteine S-methyltransferase NleE.